The sequence spans 304 residues: Aspartate carbamoyltransferase catalytic subunit (304 aa).

Carbamoyl phosphate contacts are provided by R49 and T50. K77 contacts L-aspartate. Positions 99, 127, and 130 each coordinate carbamoyl phosphate. L-aspartate is bound by residues R160 and R211. The carbamoyl phosphate site is built by A252 and P253.

Belongs to the aspartate/ornithine carbamoyltransferase superfamily. ATCase family. As to quaternary structure, heterododecamer (2C3:3R2) of six catalytic PyrB chains organized as two trimers (C3), and six regulatory PyrI chains organized as three dimers (R2).

The catalysed reaction is carbamoyl phosphate + L-aspartate = N-carbamoyl-L-aspartate + phosphate + H(+). It participates in pyrimidine metabolism; UMP biosynthesis via de novo pathway; (S)-dihydroorotate from bicarbonate: step 2/3. In terms of biological role, catalyzes the condensation of carbamoyl phosphate and aspartate to form carbamoyl aspartate and inorganic phosphate, the committed step in the de novo pyrimidine nucleotide biosynthesis pathway. The chain is Aspartate carbamoyltransferase catalytic subunit from Bacillus cereus (strain G9842).